The following is a 1397-amino-acid chain: DNA-directed RNA polymerase subunit beta' (1397 aa).

Zn(2+) is bound by residues cysteine 75, cysteine 77, cysteine 90, and cysteine 93. Residues aspartate 465, aspartate 467, and aspartate 469 each coordinate Mg(2+). Positions 819, 893, 900, and 903 each coordinate Zn(2+).

The protein belongs to the RNA polymerase beta' chain family. In terms of assembly, the RNAP catalytic core consists of 2 alpha, 1 beta, 1 beta' and 1 omega subunit. When a sigma factor is associated with the core the holoenzyme is formed, which can initiate transcription. It depends on Mg(2+) as a cofactor. Zn(2+) serves as cofactor.

The catalysed reaction is RNA(n) + a ribonucleoside 5'-triphosphate = RNA(n+1) + diphosphate. DNA-dependent RNA polymerase catalyzes the transcription of DNA into RNA using the four ribonucleoside triphosphates as substrates. The protein is DNA-directed RNA polymerase subunit beta' of Acinetobacter baylyi (strain ATCC 33305 / BD413 / ADP1).